Here is a 256-residue protein sequence, read N- to C-terminus: Imidazole glycerol phosphate synthase subunit HisF (256 aa).

Active-site residues include Asp-12 and Asp-131.

The protein belongs to the HisA/HisF family. In terms of assembly, heterodimer of HisH and HisF.

It localises to the cytoplasm. The catalysed reaction is 5-[(5-phospho-1-deoxy-D-ribulos-1-ylimino)methylamino]-1-(5-phospho-beta-D-ribosyl)imidazole-4-carboxamide + L-glutamine = D-erythro-1-(imidazol-4-yl)glycerol 3-phosphate + 5-amino-1-(5-phospho-beta-D-ribosyl)imidazole-4-carboxamide + L-glutamate + H(+). Its pathway is amino-acid biosynthesis; L-histidine biosynthesis; L-histidine from 5-phospho-alpha-D-ribose 1-diphosphate: step 5/9. In terms of biological role, IGPS catalyzes the conversion of PRFAR and glutamine to IGP, AICAR and glutamate. The HisF subunit catalyzes the cyclization activity that produces IGP and AICAR from PRFAR using the ammonia provided by the HisH subunit. This chain is Imidazole glycerol phosphate synthase subunit HisF, found in Pseudomonas putida (strain ATCC 700007 / DSM 6899 / JCM 31910 / BCRC 17059 / LMG 24140 / F1).